A 147-amino-acid chain; its full sequence is UPF0178 protein VP2328 (147 aa).

This sequence belongs to the UPF0178 family.

This Vibrio parahaemolyticus serotype O3:K6 (strain RIMD 2210633) protein is UPF0178 protein VP2328.